The following is a 376-amino-acid chain: Succinyl-diaminopimelate desuccinylase (376 aa).

His66 provides a ligand contact to Zn(2+). Residue Asp68 is part of the active site. Asp99 is a Zn(2+) binding site. Residue Glu133 is the Proton acceptor of the active site. 3 residues coordinate Zn(2+): Glu134, Glu162, and His348.

Belongs to the peptidase M20A family. DapE subfamily. Homodimer. The cofactor is Zn(2+). Requires Co(2+) as cofactor.

The catalysed reaction is N-succinyl-(2S,6S)-2,6-diaminopimelate + H2O = (2S,6S)-2,6-diaminopimelate + succinate. The protein operates within amino-acid biosynthesis; L-lysine biosynthesis via DAP pathway; LL-2,6-diaminopimelate from (S)-tetrahydrodipicolinate (succinylase route): step 3/3. Functionally, catalyzes the hydrolysis of N-succinyl-L,L-diaminopimelic acid (SDAP), forming succinate and LL-2,6-diaminopimelate (DAP), an intermediate involved in the bacterial biosynthesis of lysine and meso-diaminopimelic acid, an essential component of bacterial cell walls. This is Succinyl-diaminopimelate desuccinylase from Thioalkalivibrio sulfidiphilus (strain HL-EbGR7).